The primary structure comprises 565 residues: Periplasmic trehalase (565 aa).

The signal sequence occupies residues 1-30 (MKSPTPSRPQKMALIPACIFLCFAALSVQA). Substrate-binding positions include Arg152, 159–160 (WD), Asn196, 205–207 (RSQ), 277–279 (RPE), and Gly310. Residues Asp312 and Glu496 each act as proton donor/acceptor in the active site. Glu511 provides a ligand contact to substrate. Positions 539-565 (CDNVPATRPLSESTTQPLKQKEAEPTP) are disordered.

The protein belongs to the glycosyl hydrolase 37 family. As to quaternary structure, monomer.

It localises to the periplasm. It carries out the reaction alpha,alpha-trehalose + H2O = alpha-D-glucose + beta-D-glucose. In terms of biological role, provides the cells with the ability to utilize trehalose at high osmolarity by splitting it into glucose molecules that can subsequently be taken up by the phosphotransferase-mediated uptake system. The sequence is that of Periplasmic trehalase from Escherichia coli (strain SMS-3-5 / SECEC).